Consider the following 177-residue polypeptide: UPF0114 protein HPAG1_0183 (177 aa).

The next 4 helical transmembrane spans lie at 15 to 35 (WLLAPLCIAMSLVLVVLGYVF), 54 to 74 (LVLSALGLVDLLFMAGLVLMV), 102 to 122 (FNALKLKVSLSIVAISAIFLL), and 145 to 165 (PIFWQVVIHLVFVCSALLAAV).

Belongs to the UPF0114 family.

It localises to the cell membrane. The chain is UPF0114 protein HPAG1_0183 from Helicobacter pylori (strain HPAG1).